The primary structure comprises 301 residues: ATP synthase gamma chain (301 aa).

This sequence belongs to the ATPase gamma chain family. As to quaternary structure, F-type ATPases have 2 components, CF(1) - the catalytic core - and CF(0) - the membrane proton channel. CF(1) has five subunits: alpha(3), beta(3), gamma(1), delta(1), epsilon(1). CF(0) has three main subunits: a, b and c.

The protein localises to the cell inner membrane. In terms of biological role, produces ATP from ADP in the presence of a proton gradient across the membrane. The gamma chain is believed to be important in regulating ATPase activity and the flow of protons through the CF(0) complex. The polypeptide is ATP synthase gamma chain (Bordetella bronchiseptica (strain ATCC BAA-588 / NCTC 13252 / RB50) (Alcaligenes bronchisepticus)).